A 227-amino-acid chain; its full sequence is Uridylate kinase (227 aa).

ATP is bound at residue 9-10 (GS). Gly44 lines the UMP pocket. Residues Gly45 and Arg49 each contribute to the ATP site. UMP contacts are provided by residues Asp66 and 114–120 (TVPGHTT). Residues Thr140, Phe146, and Asp149 each contribute to the ATP site.

This sequence belongs to the UMP kinase family. In terms of assembly, homohexamer.

The protein localises to the cytoplasm. It catalyses the reaction UMP + ATP = UDP + ADP. It functions in the pathway pyrimidine metabolism; CTP biosynthesis via de novo pathway; UDP from UMP (UMPK route): step 1/1. Its activity is regulated as follows. Inhibited by UTP. Functionally, catalyzes the reversible phosphorylation of UMP to UDP. In Natronomonas pharaonis (strain ATCC 35678 / DSM 2160 / CIP 103997 / JCM 8858 / NBRC 14720 / NCIMB 2260 / Gabara) (Halobacterium pharaonis), this protein is Uridylate kinase.